The chain runs to 334 residues: RNA 3'-terminal phosphate cyclase (334 aa).

279-282 (HMGD) provides a ligand contact to ATP. The active-site Tele-AMP-histidine intermediate is the H303.

This sequence belongs to the RNA 3'-terminal cyclase family. Type 1 subfamily.

It is found in the cytoplasm. It carries out the reaction a 3'-end 3'-phospho-ribonucleotide-RNA + ATP = a 3'-end 2',3'-cyclophospho-ribonucleotide-RNA + AMP + diphosphate. In terms of biological role, catalyzes the conversion of 3'-phosphate to a 2',3'-cyclic phosphodiester at the end of RNA. The mechanism of action of the enzyme occurs in 3 steps: (A) adenylation of the enzyme by ATP; (B) transfer of adenylate to an RNA-N3'P to produce RNA-N3'PP5'A; (C) and attack of the adjacent 2'-hydroxyl on the 3'-phosphorus in the diester linkage to produce the cyclic end product. The biological role of this enzyme is unknown but it is likely to function in some aspects of cellular RNA processing. This chain is RNA 3'-terminal phosphate cyclase, found in Metallosphaera sedula (strain ATCC 51363 / DSM 5348 / JCM 9185 / NBRC 15509 / TH2).